Reading from the N-terminus, the 738-residue chain is DNA topoisomerase 4 subunit A (738 aa).

The Topo IIA-type catalytic domain maps to 32–496 (LPDVRDGLKP…SFEEVTLTNQ (465 aa)). Residue Tyr120 is the O-(5'-phospho-DNA)-tyrosine intermediate of the active site.

It belongs to the type II topoisomerase GyrA/ParC subunit family. ParC type 1 subfamily. Heterotetramer composed of ParC and ParE.

The protein localises to the cell membrane. The catalysed reaction is ATP-dependent breakage, passage and rejoining of double-stranded DNA.. Its function is as follows. Topoisomerase IV is essential for chromosome segregation. It relaxes supercoiled DNA. Performs the decatenation events required during the replication of a circular DNA molecule. This is DNA topoisomerase 4 subunit A from Rickettsia conorii (strain ATCC VR-613 / Malish 7).